We begin with the raw amino-acid sequence, 194 residues long: Protein GrpE (194 aa).

This sequence belongs to the GrpE family. In terms of assembly, homodimer.

It localises to the cytoplasm. Its function is as follows. Participates actively in the response to hyperosmotic and heat shock by preventing the aggregation of stress-denatured proteins, in association with DnaK and GrpE. It is the nucleotide exchange factor for DnaK and may function as a thermosensor. Unfolded proteins bind initially to DnaJ; upon interaction with the DnaJ-bound protein, DnaK hydrolyzes its bound ATP, resulting in the formation of a stable complex. GrpE releases ADP from DnaK; ATP binding to DnaK triggers the release of the substrate protein, thus completing the reaction cycle. Several rounds of ATP-dependent interactions between DnaJ, DnaK and GrpE are required for fully efficient folding. The protein is Protein GrpE of Aliivibrio fischeri (strain ATCC 700601 / ES114) (Vibrio fischeri).